Here is a 172-residue protein sequence, read N- to C-terminus: uncharacterized protein (172 aa).

This sequence belongs to the baculoviridae 19 kDa protein family.

This is an uncharacterized protein from Orgyia pseudotsugata multicapsid polyhedrosis virus (OpMNPV).